The chain runs to 157 residues: Putative low molecular weight protein-tyrosine-phosphatase slr0328 (157 aa).

Residue Cys7 is the Nucleophile of the active site. Arg13 is an active-site residue. Catalysis depends on Asp124, which acts as the Proton donor.

This sequence belongs to the low molecular weight phosphotyrosine protein phosphatase family.

It catalyses the reaction O-phospho-L-tyrosyl-[protein] + H2O = L-tyrosyl-[protein] + phosphate. The polypeptide is Putative low molecular weight protein-tyrosine-phosphatase slr0328 (Synechocystis sp. (strain ATCC 27184 / PCC 6803 / Kazusa)).